Here is a 444-residue protein sequence, read N- to C-terminus: Transcription activator AFTR-2 (444 aa).

Positions 16–43 (CDFCTQSKLRCNKNKPSCRRCTLQQQPC) form a DNA-binding region, zn(2)-C6 fungal-type. The interval 49-88 (RRTGRPPKHPRKANDCQEANGQHGDQDPVTSTPGGSYQQQ) is disordered. The segment covering 50–59 (RTGRPPKHPR) has biased composition (basic residues). The span at 76–88 (PVTSTPGGSYQQQ) shows a compositional bias: polar residues.

The protein resides in the nucleus. In terms of biological role, transcription factor that regulates the expression of the gene clusters that mediate the biosynthesis of the host-selective toxins (HSTs) AF-toxins responsible for Alternaria black spot of strawberry disease by the strawberry pathotype. On cellular level, AF-toxins affect plasma membrane of susceptible cells and cause a sudden increase in loss of K(+) after a few minutes of toxin treatment. The sequence is that of Transcription activator AFTR-2 from Alternaria alternata (Alternaria rot fungus).